A 738-amino-acid chain; its full sequence is Melanotransferrin (738 aa).

The first 19 residues, 1-19 (MRGPSGALWLLLALRTVLG), serve as a signal peptide directing secretion. The antigenic epitope stretch occupies residues 20–30 (GMEVRWCATSD). Transferrin-like domains lie at 23–357 (VRWC…GLLC) and 366–706 (LRWC…GMSS). Cystine bridges form between cysteine 26–cysteine 63 and cysteine 36–cysteine 54. A glycan (N-linked (GlcNAc...) asparagine) is linked at asparagine 38. The Fe(3+) site is built by aspartate 78 and tyrosine 107. Intrachain disulfides connect cysteine 130–cysteine 216, cysteine 172–cysteine 189, cysteine 186–cysteine 199, and cysteine 257–cysteine 271. A hydrogencarbonate-binding site is contributed by threonine 132. Asparagine 135 carries an N-linked (GlcNAc...) asparagine glycan. Arginine 136, valine 138, and glycine 139 together coordinate hydrogencarbonate. Tyrosine 210 is a binding site for Fe(3+). Residues histidine 279, serine 421, and tyrosine 451 each contribute to the Fe(3+) site. At serine 462 the chain carries Phosphoserine; by FAM20C. N-linked (GlcNAc...) asparagine glycosylation is present at asparagine 515. Tyrosine 556 and histidine 625 together coordinate Fe(3+). Cysteine 709 carries GPI-anchor amidated cysteine lipidation. A propeptide spans 710 to 738 (SGAAAPAPGAPLLPLLLPALAARLLPPAL) (removed in mature form).

This sequence belongs to the transferrin family. As to expression, found predominantly in human melanomas and in certain fetal tissues; also found in liver, epithelium, umbilical chord, placenta and sweat gland ducts.

Its subcellular location is the cell membrane. Functionally, involved in iron cellular uptake. Seems to be internalized and then recycled back to the cell membrane. Binds a single atom of iron per subunit. Could also bind zinc. This chain is Melanotransferrin, found in Homo sapiens (Human).